A 447-amino-acid polypeptide reads, in one-letter code: Acyl-lipid (7-3)-desaturase (447 aa).

Residues 36–94 (LTIVGDSVYDAKAFRSEHPGGAHFVSLFGGRDATEAFMEYHRRAWPKSRMSRFHVGSLA) enclose the Cytochrome b5 heme-binding domain. 2 residues coordinate heme: His53 and His76. 3 consecutive transmembrane segments (helical) span residues 123–143 (GFAP…AIAL), 154–174 (LLPS…IQHD), and 185–205 (SVNL…ILWL). Positions 173 to 177 (HDANH) match the Histidine box-1 motif. The Histidine box-2 motif lies at 208–213 (HVVMHH). Transmembrane regions (helical) follow at residues 244–264 (WLQH…LLFL), 286–306 (LFMP…ALPL), and 315–335 (AVCI…FFFI). The Histidine box-3 motif lies at 386 to 390 (QIEHH).

The protein belongs to the fatty acid desaturase type 1 family. It depends on Fe(2+) as a cofactor.

Its subcellular location is the membrane. The enzyme catalyses a (7Z,10Z,13Z,16Z,19Z)-docosapentaenoyl-containing glycerolipid + 2 Fe(II)-[cytochrome b5] + O2 + 2 H(+) = a (4Z,7Z,10Z,13Z,16Z,19Z)-docosahexaenoyl-containing glycerolipid + 2 Fe(III)-[cytochrome b5] + 2 H2O. It catalyses the reaction a (7Z,10Z,13Z,16Z)-docosatetraenoyl-containing glycerolipid + 2 Fe(II)-[cytochrome b5] + O2 + 2 H(+) = a (4Z,7Z,10Z,13Z,16Z)-docosapentaenoyl-containing glycerolipid + 2 Fe(III)-[cytochrome b5] + 2 H2O. Its function is as follows. Fatty acid desaturase that introduces a cis double bond at the 4-position in 22-carbon polyunsaturated fatty acids that contain a Delta(7) double bond, resulting in the production of delta-4 desaturated fatty acid docosahexanoic acid (DHA). This Rebecca salina (Marine microalga) protein is Acyl-lipid (7-3)-desaturase.